The primary structure comprises 352 residues: UPF0324 membrane protein blr3189 (352 aa).

11 helical membrane-spanning segments follow: residues 21–43 (IAAL…LLER), 53–71 (YVEA…RSFW), 88–110 (LLEV…ASGI), 114–136 (ASIA…LLGL), 143–165 (LIAC…IIGA), 175–197 (SFTA…LLQL), 204–226 (ILAG…AGLV), 236–253 (LMRV…SLVA), 265–284 (VGFF…LATL), 294–316 (VVGP…LGLG), and 329–351 (VTAA…VHWF).

The protein belongs to the UPF0324 family.

The protein resides in the cell membrane. This is UPF0324 membrane protein blr3189 from Bradyrhizobium diazoefficiens (strain JCM 10833 / BCRC 13528 / IAM 13628 / NBRC 14792 / USDA 110).